We begin with the raw amino-acid sequence, 240 residues long: Small ribosomal subunit protein uS2c (240 aa).

It belongs to the universal ribosomal protein uS2 family.

The protein resides in the plastid. The protein localises to the chloroplast. The protein is Small ribosomal subunit protein uS2c (rps2) of Euglena gracilis.